Reading from the N-terminus, the 1216-residue chain is 1-phosphatidylinositol 4,5-bisphosphate phosphodiesterase beta-1 (1216 aa).

C17 is lipidated: S-palmitoyl cysteine. S236 carries the phosphoserine modification. A PI-PLC X-box domain is found at 316–467; that stretch reads EDMSQPLSHY…LMYKILVKNK (152 aa). Residues H331 and H378 contribute to the active site. Residue S417 is modified to Phosphoserine. The interval 469–534 is disordered; sequence KSHKSSEGSG…MDEGTAGSEA (66 aa). Residues 472 to 483 are compositionally biased toward basic and acidic residues; the sequence is KSSEGSGKKKLS. The span at 491–501 shows a compositional bias: low complexity; it reads SDSSSVFEPSS. Residues 507 to 518 are compositionally biased toward acidic residues; sequence ADTESDDDDDDD. T509 carries the post-translational modification Phosphothreonine. S511 and S582 each carry phosphoserine. The PI-PLC Y-box domain occupies 540-656; sequence MSNLVNYIQP…GYRLKPEFMR (117 aa). Positions 656–784 constitute a C2 domain; that stretch reads RRPDKHFDPF…CLRNERNQPL (129 aa). Disordered regions lie at residues 834-891, 933-993, 1071-1095, and 1172-1216; these read DEEE…VKAP, LVKR…IEQD, KMDK…EEEK, and KISE…DTPL. S887 is subject to Phosphoserine; by PKC. Composition is skewed to basic and acidic residues over residues 941-951 and 959-979; these read TTDLIKEHTTK and YLRR…KKSE. 2 positions are modified to phosphoserine: S978 and S987. The span at 980–991 shows a compositional bias: polar residues; sequence PSSPDHVSSTIE. Residues 1075–1095 are compositionally biased toward basic and acidic residues; it reads KRQEKITEAKSKDKSQMEEEK. Residues 1187 to 1198 show a composition bias toward polar residues; it reads TSDSGKLNQKPP. 2 positions are modified to phosphoserine: S1199 and S1200. Basic and acidic residues predominate over residues 1207 to 1216; that stretch reads NPGKEFDTPL.

As to quaternary structure, interacts with DGKQ. It depends on Ca(2+) as a cofactor. Post-translationally, palmitoylated. Palmitoylation at Cys-17 by ZDHHC21 regulates the signaling activity of PLCB1 and the function of the endothelial barrier. Palmitoylation by ZDHHC21 is stimulated by inflammation.

It is found in the nucleus membrane. The protein resides in the cytoplasm. The catalysed reaction is a 1,2-diacyl-sn-glycero-3-phospho-(1D-myo-inositol-4,5-bisphosphate) + H2O = 1D-myo-inositol 1,4,5-trisphosphate + a 1,2-diacyl-sn-glycerol + H(+). The enzyme catalyses a 1,2-diacyl-sn-glycero-3-phospho-(1D-myo-inositol) + H2O = 1D-myo-inositol 1-phosphate + a 1,2-diacyl-sn-glycerol + H(+). In terms of biological role, catalyzes the hydrolysis of 1-phosphatidylinositol 4,5-bisphosphate into diacylglycerol (DAG) and inositol 1,4,5-trisphosphate (IP3) and mediates intracellular signaling downstream of G protein-coupled receptors. Regulates the function of the endothelial barrier. The sequence is that of 1-phosphatidylinositol 4,5-bisphosphate phosphodiesterase beta-1 (PLCB1) from Bos taurus (Bovine).